We begin with the raw amino-acid sequence, 617 residues long: MLLARMNPQVQPENNGADTGPEQPLRARKTAELLVVKERNGVQCLLAPRDGDAQPRETWGKKIDFLLSVVGFAVDLANVWRFPYLCYKNGGGAFLIPYTLFLIIAGMPLFYMELALGQYNREGAATVWKICPFFKGVGYAVILIALYVGFYYNVIIAWSLYYLFSSFTLNLPWTDCGHTWNSPNCTDPKLLNGSVLGNHTKYSKYKFTPAAEFYERGVLHLHESSGIHDIGLPQWQLLLCLMVVVIVLYFSLWKGVKTSGKVVWITATLPYFVLFVLLVHGVTLPGASNGINAYLHIDFYRLKEATVWIDAATQIFFSLGAGFGVLIAFASYNKFDNNCYRDALLTSSINCITSFVSGFAIFSILGYMAHEHKVNIEDVATEGAGLVFILYPEAISTLSGSTFWAVVFFVMLLALGLDSSMGGMEAVITGLADDFQVLKRHRKLFTFGVTFSTFLLALFCITKGGIYVLTLLDTFAAGTSILFAVLMEAIGVSWFYGVDRFSNDIQQMMGFRPGLYWRLCWKFVSPAFLLFVVVVSIINFKPLTYDDYIFPPWANWVGWGIALSSMVLVPIYVIYKFLSTQGSLWERLAYGITPENEHHLVAQRDIRQFQLQHWLAI.

A disordered region spans residues 1–23 (MLLARMNPQVQPENNGADTGPEQ). Residues 1–62 (MLLARMNPQV…AQPRETWGKK (62 aa)) lie on the Cytoplasmic side of the membrane. Over residues 8 to 17 (PQVQPENNGA) the composition is skewed to polar residues. Residues 63–88 (IDFLLSVVGFAVDLANVWRFPYLCYK) form a helical membrane-spanning segment. The Na(+) site is built by G71, A73, and V74. D75 is a (R)-noradrenaline binding site. D75 is a binding site for dopamine. N78 lines the Na(+) pocket. Y87 and K88 together coordinate (R)-noradrenaline. Residues 89–92 (NGGG) lie on the Extracellular side of the membrane. A helical membrane pass occupies residues 93-116 (AFLIPYTLFLIIAGMPLFYMELAL). Residues 117-135 (GQYNREGAATVWKICPFFK) are Cytoplasmic-facing. A helical transmembrane segment spans residues 136-166 (GVGYAVILIALYVGFYYNVIIAWSLYYLFSS). (R)-noradrenaline is bound by residues A145 and G149. Residue A145 participates in dopamine binding. At 167–233 (FTLNLPWTDC…SSGIHDIGLP (67 aa)) the chain is on the extracellular side. Cysteines 176 and 185 form a disulfide. N184, N192, and N198 each carry an N-linked (GlcNAc...) asparagine glycan. The chain crosses the membrane as a helical span at residues 234-254 (QWQLLLCLMVVVIVLYFSLWK). Topologically, residues 255 to 257 (GVK) are cytoplasmic. Residues 258–282 (TSGKVVWITATLPYFVLFVLLVHGV) form a helical membrane-spanning segment. Topologically, residues 283–306 (TLPGASNGINAYLHIDFYRLKEAT) are extracellular. The helical transmembrane segment at 307–332 (VWIDAATQIFFSLGAGFGVLIAFASY) threads the bilayer. F317 contacts (R)-noradrenaline. A dopamine-binding site is contributed by F317. S318 is a binding site for Na(+). Residues 333-338 (NKFDNN) are Cytoplasmic-facing. A helical membrane pass occupies residues 339–362 (CYRDALLTSSINCITSFVSGFAIF). A Na(+)-binding site is contributed by N350. Residues 363–402 (SILGYMAHEHKVNIEDVATEGAGLVFILYPEAISTLSGST) are Extracellular-facing. E382 contacts (R)-noradrenaline. E382 lines the dopamine pocket. Residues 403–428 (FWAVVFFVMLLALGLDSSMGGMEAVI) traverse the membrane as a helical segment. Na(+) contacts are provided by D418 and S419. The Cytoplasmic portion of the chain corresponds to 429–443 (TGLADDFQVLKRHRK). The helical transmembrane segment at 444–464 (LFTFGVTFSTFLLALFCITKG) threads the bilayer. Position 465 (G465) is a topological domain, extracellular. Residues 466 to 492 (IYVLTLLDTFAAGTSILFAVLMEAIGV) traverse the membrane as a helical segment. Over 493-522 (SWFYGVDRFSNDIQQMMGFRPGLYWRLCWK) the chain is Cytoplasmic. The chain crosses the membrane as a helical span at residues 523–545 (FVSPAFLLFVVVVSIINFKPLTY). The Extracellular segment spans residues 546–548 (DDY). Residues 549–569 (IFPPWANWVGWGIALSSMVLV) form a helical membrane-spanning segment. The Cytoplasmic portion of the chain corresponds to 570-617 (PIYVIYKFLSTQGSLWERLAYGITPENEHHLVAQRDIRQFQLQHWLAI).

It belongs to the sodium:neurotransmitter symporter (SNF) (TC 2.A.22) family. SLC6A2 subfamily. As to quaternary structure, monomer. Can form homodimers in the cell membrane; homodimerization is mostly mediated by cholesterol and lipids, and regulates neurotransmitter transport activity. Interacts with PRKCABP. Post-translationally, palmitoylated; palmitoylation regulates protein levels and neurotransmitter transport.

It is found in the cell membrane. The protein localises to the cell projection. Its subcellular location is the axon. The protein resides in the synapse. It localises to the synaptosome. The enzyme catalyses (R)-noradrenaline(out) + chloride(out) + Na(+)(out) = (R)-noradrenaline(in) + chloride(in) + Na(+)(in). The catalysed reaction is dopamine(out) + chloride(out) + Na(+)(out) = dopamine(in) + chloride(in) + Na(+)(in). It carries out the reaction dopamine(out) + chloride(out) + 2 Na(+)(out) = dopamine(in) + chloride(in) + 2 Na(+)(in). Inhibited by mazindol, desipramine, nomifensine and nortriptyline. Mediates sodium- and chloride-dependent transport of norepinephrine (also known as noradrenaline), the primary signaling neurotransmitter in the autonomic sympathetic nervous system. Is responsible for norepinephrine re-uptake and clearance from the synaptic cleft, thus playing a crucial role in norepinephrine inactivation and homeostasis. Can also mediate sodium- and chloride-dependent transport of dopamine. This Homo sapiens (Human) protein is Sodium-dependent noradrenaline transporter.